The sequence spans 72 residues: Cell division protein ZapB (72 aa).

Positions 1-71 form a coiled coil; it reads MSLEILDQLE…LRSLLGRIDN (71 aa). The segment at 36–56 is disordered; the sequence is LSRQTNEQLRSENEHLKTEHH. Positions 44 to 56 are enriched in basic and acidic residues; sequence LRSENEHLKTEHH.

This sequence belongs to the ZapB family. As to quaternary structure, homodimer. The ends of the coiled-coil dimer bind to each other, forming polymers. Interacts with FtsZ.

It localises to the cytoplasm. Non-essential, abundant cell division factor that is required for proper Z-ring formation. It is recruited early to the divisome by direct interaction with FtsZ, stimulating Z-ring assembly and thereby promoting cell division earlier in the cell cycle. Its recruitment to the Z-ring requires functional FtsA or ZipA. The sequence is that of Cell division protein ZapB from Histophilus somni (strain 129Pt) (Haemophilus somnus).